Reading from the N-terminus, the 104-residue chain is MKIHVRKNDTVIVISGKDKGKTGEVLKAYPKTGKVLVQGVNIVKKHQKANKGQVESAIIEKEAAINSSKVMLYCNKCKNATRISNKVLDDGTKVRVCKKCGETF.

This sequence belongs to the universal ribosomal protein uL24 family. Part of the 50S ribosomal subunit.

Functionally, one of two assembly initiator proteins, it binds directly to the 5'-end of the 23S rRNA, where it nucleates assembly of the 50S subunit. In terms of biological role, one of the proteins that surrounds the polypeptide exit tunnel on the outside of the subunit. This chain is Large ribosomal subunit protein uL24, found in Clostridium beijerinckii (strain ATCC 51743 / NCIMB 8052) (Clostridium acetobutylicum).